A 236-amino-acid polypeptide reads, in one-letter code: Phycocyanobilin:ferredoxin oxidoreductase (236 aa).

It belongs to the HY2 family.

The catalysed reaction is (2R,3Z)-phycocyanobilin + 4 oxidized [2Fe-2S]-[ferredoxin] = biliverdin IXalpha + 4 reduced [2Fe-2S]-[ferredoxin] + 4 H(+). Catalyzes the four-electron reduction of biliverdin IX-alpha (2-electron reduction at both the A and D rings); the reaction proceeds via an isolatable 2-electron intermediate, 181,182-dihydrobiliverdin. This Thermosynechococcus vestitus (strain NIES-2133 / IAM M-273 / BP-1) protein is Phycocyanobilin:ferredoxin oxidoreductase (pcyA).